A 300-amino-acid chain; its full sequence is Type II methyltransferase M.Cfr9I (300 aa).

The disordered stretch occupies residues 109 to 129 (RGYRAPDKKNPARAMAVRPDT).

Belongs to the N(4)/N(6)-methyltransferase family. N(4) subfamily.

The enzyme catalyses a 2'-deoxycytidine in DNA + S-adenosyl-L-methionine = an N(4)-methyl-2'-deoxycytidine in DNA + S-adenosyl-L-homocysteine + H(+). Its function is as follows. A beta subtype methylase, recognizes the double-stranded sequence 5'-CCCGGG-3', methylates C-2 on both strands, and protects the DNA from cleavage by the Cfr9I endonuclease. This Citrobacter freundii protein is Type II methyltransferase M.Cfr9I.